The following is a 272-amino-acid chain: ATP synthase subunit a (272 aa).

The next 6 helical transmembrane spans lie at 42–62 (IDSL…AGFV), 108–128 (FVWI…LPCI), 140–162 (ILPS…LMIF), 177–197 (LIYH…LEII), 219–239 (LIFI…LSVP), and 241–261 (AIFH…LTII).

It belongs to the ATPase A chain family. F-type ATPases have 2 components, CF(1) - the catalytic core - and CF(0) - the membrane proton channel. CF(1) has five subunits: alpha(3), beta(3), gamma(1), delta(1), epsilon(1). CF(0) has three main subunits: a(1), b(2) and c(9-12). The alpha and beta chains form an alternating ring which encloses part of the gamma chain. CF(1) is attached to CF(0) by a central stalk formed by the gamma and epsilon chains, while a peripheral stalk is formed by the delta and b chains.

Its subcellular location is the cell inner membrane. In terms of biological role, key component of the proton channel; it plays a direct role in the translocation of protons across the membrane. The protein is ATP synthase subunit a of Blochmanniella floridana.